The primary structure comprises 69 residues: UPF0337 protein RB0906 (69 aa).

The protein belongs to the UPF0337 (CsbD) family.

The chain is UPF0337 protein RB0906 from Rhizobium meliloti (strain 1021) (Ensifer meliloti).